We begin with the raw amino-acid sequence, 161 residues long: Large-conductance mechanosensitive channel (161 aa).

Transmembrane regions (helical) follow at residues 14 to 34 (VVDM…VNTL) and 85 to 105 (GLFL…FILV).

This sequence belongs to the MscL family. In terms of assembly, homopentamer.

The protein resides in the cell inner membrane. Functionally, channel that opens in response to stretch forces in the membrane lipid bilayer. May participate in the regulation of osmotic pressure changes within the cell. This chain is Large-conductance mechanosensitive channel, found in Chlorobium luteolum (strain DSM 273 / BCRC 81028 / 2530) (Pelodictyon luteolum).